The following is a 128-amino-acid chain: Glycine cleavage system H protein (128 aa).

A Lipoyl-binding domain is found at 24-106 (LVRIGISEFA…HGEGWLLIIR (83 aa)). The residue at position 65 (Lys-65) is an N6-lipoyllysine.

The protein belongs to the GcvH family. In terms of assembly, the glycine cleavage system is composed of four proteins: P, T, L and H. (R)-lipoate is required as a cofactor.

In terms of biological role, the glycine cleavage system catalyzes the degradation of glycine. The H protein shuttles the methylamine group of glycine from the P protein to the T protein. This Prochlorococcus marinus (strain NATL1A) protein is Glycine cleavage system H protein.